The chain runs to 124 residues: Small ribosomal subunit protein uS12c (124 aa).

It belongs to the universal ribosomal protein uS12 family. Part of the 30S ribosomal subunit.

The protein localises to the plastid. The protein resides in the chloroplast. In terms of biological role, with S4 and S5 plays an important role in translational accuracy. Located at the interface of the 30S and 50S subunits. This is Small ribosomal subunit protein uS12c (rps12) from Oryza nivara (Indian wild rice).